A 171-amino-acid polypeptide reads, in one-letter code: bZIP transcription factor 2 (171 aa).

Low complexity predominate over residues methionine 1–serine 24. The tract at residues methionine 1–valine 54 is disordered. The bZIP domain occupies aspartate 29–leucine 92. Residues arginine 31–lysine 52 are basic motif. Residues leucine 57–isoleucine 71 form a leucine-zipper region.

Forms heterodimers with BZIP9, BZIP10, BZIP25 and BZIP63. Component of a ternary complex composed of BZIP2-BZIP63 heterodimer and KIN10.

It is found in the nucleus. Functionally, transcription factor that binds to specific DNA sequences in target gene promoters. BZIP2-BZIP63-KIN10 complex binds to the ETFQO promoter to up-regulate its transcription. This Arabidopsis thaliana (Mouse-ear cress) protein is bZIP transcription factor 2.